The following is a 301-amino-acid chain: UDP-3-O-acyl-N-acetylglucosamine deacetylase (301 aa).

3 residues coordinate Zn(2+): histidine 81, histidine 237, and aspartate 241. Histidine 264 functions as the Proton donor in the catalytic mechanism.

It belongs to the LpxC family. The cofactor is Zn(2+).

It catalyses the reaction a UDP-3-O-[(3R)-3-hydroxyacyl]-N-acetyl-alpha-D-glucosamine + H2O = a UDP-3-O-[(3R)-3-hydroxyacyl]-alpha-D-glucosamine + acetate. It participates in glycolipid biosynthesis; lipid IV(A) biosynthesis; lipid IV(A) from (3R)-3-hydroxytetradecanoyl-[acyl-carrier-protein] and UDP-N-acetyl-alpha-D-glucosamine: step 2/6. Its function is as follows. Catalyzes the hydrolysis of UDP-3-O-myristoyl-N-acetylglucosamine to form UDP-3-O-myristoylglucosamine and acetate, the committed step in lipid A biosynthesis. The protein is UDP-3-O-acyl-N-acetylglucosamine deacetylase of Leptospira interrogans serogroup Icterohaemorrhagiae serovar copenhageni (strain Fiocruz L1-130).